The sequence spans 57 residues: Bowman-Birk type proteinase inhibitor B4 (57 aa).

4 cysteine pairs are disulfide-bonded: Cys6–Cys55, Cys12–Cys17, Cys26–Cys33, and Cys30–Cys47.

This sequence belongs to the Bowman-Birk serine protease inhibitor family. In terms of tissue distribution, expressed in bulb (at protein level).

Its function is as follows. Serine protease inhibitor. Inhibits trypsin (Ki = 110 nM) and very weakly inhibits chymotrypsin (Ki =1200 nM). Does not inhibit bacterial subtilisin. This chain is Bowman-Birk type proteinase inhibitor B4, found in Hyacinthus orientalis (Common hyacinth).